A 440-amino-acid polypeptide reads, in one-letter code: Thymidine phosphorylase (440 aa).

This sequence belongs to the thymidine/pyrimidine-nucleoside phosphorylase family. As to quaternary structure, homodimer.

The enzyme catalyses thymidine + phosphate = 2-deoxy-alpha-D-ribose 1-phosphate + thymine. It functions in the pathway pyrimidine metabolism; dTMP biosynthesis via salvage pathway; dTMP from thymine: step 1/2. Functionally, the enzymes which catalyze the reversible phosphorolysis of pyrimidine nucleosides are involved in the degradation of these compounds and in their utilization as carbon and energy sources, or in the rescue of pyrimidine bases for nucleotide synthesis. The sequence is that of Thymidine phosphorylase from Shigella boydii serotype 4 (strain Sb227).